A 730-amino-acid polypeptide reads, in one-letter code: Dual function macrocyclase-peptidase POPB (730 aa).

Residues 1–34 (MSSVTWAPGNYPSTRRSDHVDTYQSASKGEVPVP) form a disordered region. Catalysis depends on charge relay system residues Ser-577, Asp-661, and His-698.

The protein belongs to the peptidase S9A family. As to quaternary structure, monomer.

The catalysed reaction is Hydrolysis of Pro-|-Xaa &gt;&gt; Ala-|-Xaa in oligopeptides.. In terms of biological role, dual function macrocyclase-peptidase involved in the biosynthesis of the highly toxic amanitin toxin family of macrocycles. Cleaves peptide bonds on the C-terminal side of prolyl residues. The enzyme first removes 10 residues from the N-terminus of a 35-residue substrate. Conformational trapping of the 25 amino-acid peptide forces the enzyme to release this intermediate rather than proceed to macrocyclization. The enzyme rebinds the 25 amino-acid peptide in a different conformation and catalyzes macrocyclization of the N-terminal eight residues. The sequence is that of Dual function macrocyclase-peptidase POPB from Galerina marginata (strain CBS 339.88).